We begin with the raw amino-acid sequence, 471 residues long: A-type ATP synthase subunit B (471 aa).

The protein belongs to the ATPase alpha/beta chains family. As to quaternary structure, has multiple subunits with at least A(3), B(3), C, D, E, F, H, I and proteolipid K(x).

The protein localises to the cell membrane. In terms of biological role, component of the A-type ATP synthase that produces ATP from ADP in the presence of a proton gradient across the membrane. The B chain is a regulatory subunit. The chain is A-type ATP synthase subunit B from Natronomonas pharaonis (strain ATCC 35678 / DSM 2160 / CIP 103997 / JCM 8858 / NBRC 14720 / NCIMB 2260 / Gabara) (Halobacterium pharaonis).